The chain runs to 344 residues: Uroporphyrinogen decarboxylase (344 aa).

Substrate is bound by residues 24–28 (RQAGR), Phe-43, Asp-74, Tyr-149, Ser-204, and His-319.

It belongs to the uroporphyrinogen decarboxylase family. Homodimer.

It is found in the cytoplasm. It carries out the reaction uroporphyrinogen III + 4 H(+) = coproporphyrinogen III + 4 CO2. Its pathway is porphyrin-containing compound metabolism; protoporphyrin-IX biosynthesis; coproporphyrinogen-III from 5-aminolevulinate: step 4/4. Its function is as follows. Catalyzes the decarboxylation of four acetate groups of uroporphyrinogen-III to yield coproporphyrinogen-III. The polypeptide is Uroporphyrinogen decarboxylase (Agrobacterium fabrum (strain C58 / ATCC 33970) (Agrobacterium tumefaciens (strain C58))).